Consider the following 627-residue polypeptide: Altered inheritance of mitochondria protein 9, mitochondrial (627 aa).

Residues 1–43 (MIRYTVAGHSRRCVVGASKRVGAIKCITVAATKRFISNKSNEV) constitute a mitochondrion transit peptide.

The protein belongs to the AIM9 family.

The protein resides in the mitochondrion. The polypeptide is Altered inheritance of mitochondria protein 9, mitochondrial (AIM9) (Saccharomyces cerevisiae (strain JAY291) (Baker's yeast)).